We begin with the raw amino-acid sequence, 272 residues long: DNA repair protein RecO (272 aa).

The protein belongs to the RecO family.

Functionally, involved in DNA repair and RecF pathway recombination. The sequence is that of DNA repair protein RecO from Limosilactobacillus fermentum (strain NBRC 3956 / LMG 18251) (Lactobacillus fermentum).